The sequence spans 312 residues: Serine protease 48 (312 aa).

The signal sequence occupies residues 1–22 (MGPAGLKVLLLLFLGAFQGSFT). A Peptidase S1 domain is found at 40–276 (IVGGQDAALG…YQKWISAIIS (237 aa)). Cysteine 65 and cysteine 81 are disulfide-bonded. Catalysis depends on charge relay system residues histidine 80 and aspartate 126. Residue asparagine 149 is glycosylated (N-linked (GlcNAc...) asparagine). Cystine bridges form between cysteine 160/cysteine 235, cysteine 190/cysteine 214, and cysteine 225/cysteine 253. Catalysis depends on serine 229, which acts as the Charge relay system. Asparagine 263 carries an N-linked (GlcNAc...) asparagine glycan.

Belongs to the peptidase S1 family.

Its subcellular location is the secreted. This Mus musculus (Mouse) protein is Serine protease 48 (Prss48).